A 1051-amino-acid chain; its full sequence is Eukaryotic translation initiation factor 3 subunit A (1051 aa).

Positions 92 to 121 form a coiled coil; that stretch reads LKKFIELAEKKVTEAQAKADEIQSSLESAA. One can recognise a PCI domain in the interval 339–523; sequence MTKAASFVLL…GVLTFDTDIF (185 aa). Residues 608–905 are a coiled coil; the sequence is RVLIEKKKEA…EAEARRAARK (298 aa). Composition is skewed to basic and acidic residues over residues 617–632, 642–664, 794–901, and 916–926; these read AATDALQRKQREEETR, EAEKQRLLDEQREREKKRLRDEQ, KEVS…EARR, and AELERPVERTA. Disordered regions lie at residues 617–664 and 794–1051; these read AATD…RDEQ and KEVS…QQQQ. Composition is skewed to low complexity over residues 948-961 and 1010-1039; these read KEAAGAAPAPAAAE and SSSSQPPSRTQTPPAAAPASSDKPEASPAP.

This sequence belongs to the eIF-3 subunit A family. In terms of assembly, component of the eukaryotic translation initiation factor 3 (eIF-3) complex.

The protein localises to the cytoplasm. Its function is as follows. RNA-binding component of the eukaryotic translation initiation factor 3 (eIF-3) complex, which is involved in protein synthesis of a specialized repertoire of mRNAs and, together with other initiation factors, stimulates binding of mRNA and methionyl-tRNAi to the 40S ribosome. The eIF-3 complex specifically targets and initiates translation of a subset of mRNAs involved in cell proliferation. This is Eukaryotic translation initiation factor 3 subunit A (tif32) from Aspergillus fumigatus (strain CBS 144.89 / FGSC A1163 / CEA10) (Neosartorya fumigata).